The primary structure comprises 67 residues: DNA-directed RNA polymerase subunit omega (67 aa).

The protein belongs to the RNA polymerase subunit omega family. In terms of assembly, the RNAP catalytic core consists of 2 alpha, 1 beta, 1 beta' and 1 omega subunit. When a sigma factor is associated with the core the holoenzyme is formed, which can initiate transcription.

The catalysed reaction is RNA(n) + a ribonucleoside 5'-triphosphate = RNA(n+1) + diphosphate. In terms of biological role, promotes RNA polymerase assembly. Latches the N- and C-terminal regions of the beta' subunit thereby facilitating its interaction with the beta and alpha subunits. The chain is DNA-directed RNA polymerase subunit omega from Nitrosomonas eutropha (strain DSM 101675 / C91 / Nm57).